A 1372-amino-acid polypeptide reads, in one-letter code: Collagen alpha-2(I) chain (1372 aa).

The N-terminal stretch at 1-22 (MLSFVDTRTLLLLAVTSCLATC) is a signal peptide. Gln23 bears the Pyrrolidone carboxylic acid mark. Residues 23 to 85 (QYLQSGSVRK…PPGLTGNFAA (63 aa)) constitute a propeptide, N-terminal propeptide. Positions 28–1135 (GSVRKGPTGD…DQPRSQPSLR (1108 aa)) are disordered. Over residues 59–77 (MGPPGPPGSPGPPGSPAPP) the composition is skewed to pro residues. At Lys90 the chain carries Allysine. A compositionally biased stretch (low complexity) spans 95–146 (GPGPMGLMGPRGPPGAVGAPGPQGFQGPAGEPGEPGQTGPAGPRGPAGSPGK). The span at 147–161 (AGEDGHPGKPGRPGE) shows a compositional bias: basic and acidic residues. A 5-hydroxylysine; alternate modification is found at Lys183. Lys183 carries an O-linked (Gal...) hydroxylysine; alternate glycan. Composition is skewed to low complexity over residues 231–260 (VGAP…SAGP), 285–299 (AGPR…LSGP), 306–327 (PGTN…AGAP), 336–351 (PGPA…RGLV), 390–416 (PGEA…LPGA), 476–495 (LPGI…RGEA), and 519–537 (PGLA…NGAQ). The segment covering 544–553 (GVQGGKGEQG) has biased composition (gly residues). A compositionally biased stretch (low complexity) spans 600 to 639 (PGESGAAGPSGPIGSRGPSGAPGPDGNKGEAGAVGAPGSA). Residues 640–649 (GASGPGGLPG) show a composition bias toward gly residues. Low complexity-rich tracts occupy residues 681-716 (RGIP…PRGS) and 725-743 (PAGP…QPGA). Residues 744 to 753 (KGEKGTKGPK) show a composition bias toward basic and acidic residues. Positions 755 to 771 (ENGIVGPTGSVGAAGPS) are enriched in low complexity. Gly residues predominate over residues 781–790 (GSRGDGGPPG). Low complexity-rich tracts occupy residues 792–801 (TGFPGAAGRT), 855–882 (SGEP…LGLP), 905–927 (ISGP…NGAP), 957–978 (PGSI…VGPA), and 987–1007 (PGPA…PSGP). Residues 1011–1022 (RGDKGEPGDKGH) are compositionally biased toward basic and acidic residues. A compositionally biased stretch (pro residues) spans 1095-1107 (AGPPGPPGPPGPP). The propeptide at 1126 to 1372 (DQPRSQPSLR…RVEVGPVCFK (247 aa)) is C-terminal propeptide. The Fibrillar collagen NC1 domain occupies 1139–1372 (YEVDATLKSL…RVEVGPVCFK (234 aa)). Cystine bridges form between Cys1169–Cys1201, Cys1209–Cys1370, and Cys1278–Cys1323. The Ca(2+) site is built by Asp1187, Asn1189, Gln1190, Cys1192, and Asp1195. Asn1273 carries N-linked (GlcNAc...) asparagine glycosylation.

The protein belongs to the fibrillar collagen family. Trimers of one alpha 2(I) and two alpha 1(I) chains. Interacts (via C-terminus) with TMEM131 (via PapD-L domain); the interaction is direct and is involved in assembly and TRAPPIII ER-to-Golgi transport complex-dependent secretion of collagen. Prolines at the third position of the tripeptide repeating unit (G-X-Y) are hydroxylated in some or all of the chains. Expressed in kidney glomeruli.

It localises to the secreted. It is found in the extracellular space. Its subcellular location is the extracellular matrix. Functionally, type I collagen is a member of group I collagen (fibrillar forming collagen). In Mus musculus (Mouse), this protein is Collagen alpha-2(I) chain (Col1a2).